A 441-amino-acid polypeptide reads, in one-letter code: ATP-dependent protease ATPase subunit HslU (441 aa).

ATP-binding positions include isoleucine 18, 60 to 65 (GVGKTE), aspartate 254, glutamate 319, and arginine 391.

The protein belongs to the ClpX chaperone family. HslU subfamily. A double ring-shaped homohexamer of HslV is capped on each side by a ring-shaped HslU homohexamer. The assembly of the HslU/HslV complex is dependent on binding of ATP.

Its subcellular location is the cytoplasm. Functionally, ATPase subunit of a proteasome-like degradation complex; this subunit has chaperone activity. The binding of ATP and its subsequent hydrolysis by HslU are essential for unfolding of protein substrates subsequently hydrolyzed by HslV. HslU recognizes the N-terminal part of its protein substrates and unfolds these before they are guided to HslV for hydrolysis. The sequence is that of ATP-dependent protease ATPase subunit HslU from Shewanella sediminis (strain HAW-EB3).